A 530-amino-acid polypeptide reads, in one-letter code: GATA zinc finger domain-containing protein 4 (530 aa).

Disordered regions lie at residues 1–27 (MSIN…FWDN) and 212–386 (STVV…INNN). Composition is skewed to low complexity over residues 7 to 17 (NNNKNNNNKNN), 216 to 290 (SNSP…FNNN), and 299 to 386 (NSNN…INNN). The segment at 494 to 518 (CSMCNIKESISWIKTMVNGQLCNAC) adopts a GATA-type zinc-finger fold.

In Dictyostelium discoideum (Social amoeba), this protein is GATA zinc finger domain-containing protein 4 (gtaD).